The following is a 451-amino-acid chain: Proline--tRNA ligase (451 aa).

It belongs to the class-II aminoacyl-tRNA synthetase family. ProS type 2 subfamily. Homodimer.

The protein localises to the cytoplasm. It carries out the reaction tRNA(Pro) + L-proline + ATP = L-prolyl-tRNA(Pro) + AMP + diphosphate. Functionally, catalyzes the attachment of proline to tRNA(Pro) in a two-step reaction: proline is first activated by ATP to form Pro-AMP and then transferred to the acceptor end of tRNA(Pro). The chain is Proline--tRNA ligase from Ruegeria sp. (strain TM1040) (Silicibacter sp.).